The primary structure comprises 65 residues: Large ribosomal subunit protein bL35 (65 aa).

Residues 1 to 22 are disordered; the sequence is MPKIKTLRSAAKRFKKTASGKF. The span at 10–22 shows a compositional bias: basic residues; it reads AAKRFKKTASGKF.

It belongs to the bacterial ribosomal protein bL35 family.

The chain is Large ribosomal subunit protein bL35 from Buchnera aphidicola subsp. Schizaphis graminum (strain Sg).